The sequence spans 69 residues: Fumarase D (69 aa).

This sequence belongs to the FumD family.

The enzyme catalyses (S)-malate = fumarate + H2O. Its function is as follows. In vitro catalyzes the addition of water to fumarate, forming malate. Cannot catalyze the reverse reaction. Cannot use the cis-isomer maleate as substrate. The sequence is that of Fumarase D from Shigella flexneri.